The following is a 177-amino-acid chain: Coatomer subunit zeta-1 (177 aa).

At Met-1 the chain carries N-acetylmethionine.

Belongs to the adaptor complexes small subunit family. As to quaternary structure, oligomeric complex that consists of at least the alpha, beta, beta', gamma, delta, epsilon and zeta subunits.

Its subcellular location is the cytoplasm. It is found in the golgi apparatus membrane. It localises to the cytoplasmic vesicle. The protein resides in the COPI-coated vesicle membrane. Functionally, the coatomer is a cytosolic protein complex that binds to dilysine motifs and reversibly associates with Golgi non-clathrin-coated vesicles, which further mediate biosynthetic protein transport from the ER, via the Golgi up to the trans Golgi network. Coatomer complex is required for budding from Golgi membranes, and is essential for the retrograde Golgi-to-ER transport of dilysine-tagged proteins. The zeta subunit may be involved in regulating the coat assembly and, hence, the rate of biosynthetic protein transport due to its association-dissociation properties with the coatomer complex. This Bos taurus (Bovine) protein is Coatomer subunit zeta-1 (COPZ1).